The following is a 292-amino-acid chain: Mycothiol acetyltransferase (292 aa).

2 N-acetyltransferase domains span residues 2–138 (AEVV…PSAP) and 141–292 (VTVR…YAHS). 1D-myo-inositol 2-(L-cysteinylamino)-2-deoxy-alpha-D-glucopyranoside is bound at residue E33. Position 68 to 70 (68 to 70 (AVV)) interacts with acetyl-CoA. E168, K215, and E225 together coordinate 1D-myo-inositol 2-(L-cysteinylamino)-2-deoxy-alpha-D-glucopyranoside. Acetyl-CoA-binding positions include 229 to 231 (VAV) and 236 to 242 (QGRGLGR). Residue Y263 participates in 1D-myo-inositol 2-(L-cysteinylamino)-2-deoxy-alpha-D-glucopyranoside binding. Residue 268–273 (NAAALH) participates in acetyl-CoA binding.

The protein belongs to the acetyltransferase family. MshD subfamily. As to quaternary structure, monomer.

It carries out the reaction 1D-myo-inositol 2-(L-cysteinylamino)-2-deoxy-alpha-D-glucopyranoside + acetyl-CoA = mycothiol + CoA + H(+). Functionally, catalyzes the transfer of acetyl from acetyl-CoA to desacetylmycothiol (Cys-GlcN-Ins) to form mycothiol. The chain is Mycothiol acetyltransferase from Tsukamurella paurometabola (strain ATCC 8368 / DSM 20162 / CCUG 35730 / CIP 100753 / JCM 10117 / KCTC 9821 / NBRC 16120 / NCIMB 702349 / NCTC 13040) (Corynebacterium paurometabolum).